Consider the following 757-residue polypeptide: MAKRPRTSEEDDDFQYADHDYEISQQRSLKKICNRVKWTRDEDEKLKKLVEQNGTDDWAFIASHLQNRSDFQCQHRWQKVLNPELIKGPWTKEEDQRVIELVQKYGPKRWSLIAKHLKGRIGKQCRERWHNHLNPEVKKSSWTEAEDRVIYEAHKRLGNRWAEIAKLLPGRTDNSIKNHWNSTMRRKVEQEGYLQDGTKSSSERTGSSTLAQKPCVTMEHLHTQNQFYIPVQTHIPVYQYASPEDSCIEHASASANLVQQSFIDDDPDKEKKIKELELLLMSTENEIRRKRLSSQAGSLPGWSGSFVMEDCVPNTLNSLGEQTSEFYSMDETQGTSVQQNSPTKYLAVEANAVLSSLQTIPEFAETLELIESDPLAWSDVTSFDLSEAVASPVKPAPLKLMRIQHNERAAECQFNVSVMLDGKKHSSISGEEEAVFPTTPNLTKYSTPPAILRKKKRLRAGQSPVNELNDGLCNDAINVALKHTPVKTLPFSPSQFFNTCSGNEQFNLENPAFTSTPICGQKVLITTPLHKETTPTDQKENAGFRTPTIRRSLLGSTPRTPTPFKNALAAQEKKYGPLKLTSQPLAFLEEDIREVLKEETGTDIFLKEEDDSVYKSCKQEHNSSKKVRKSLVLDAWEKEELGAQLFTEDSGLDVQSENAYTTSLLMIPLLEIHDNRCNLPSENQDTNSSNKANAVIKKKLNACSSKNIKLEKSLQPNYEWEAVVYGKTEDQLIMTEQARRYLNAYTATSNTSRALIL.

HTH myb-type domains are found at residues 30–81, 82–137, and 138–188; these read KKIC…QKVL, NPEL…NPEV, and KKSS…RRKV. DNA-binding regions (H-T-H motif) lie at residues 58–81, 110–133, and 161–184; these read WAFIASHLQNRSDFQCQHRWQKVL, WSLIAKHLKGRIGKQCRERWHNHL, and WAEIAKLLPGRTDNSIKNHWNSTM. The tract at residues 187 to 209 is disordered; it reads KVEQEGYLQDGTKSSSERTGSST. Polar residues predominate over residues 197 to 209; the sequence is GTKSSSERTGSST. A transcriptional activation domain region spans residues 235–300; that stretch reads IPVYQYASPE…RLSSQAGSLP (66 aa). The tract at residues 303 to 558 is negative regulatory domain; the sequence is SGSFVMEDCV…IRRSLLGSTP (256 aa).

As to quaternary structure, component of the DREAM complex. Expressed ubiquitously.

The protein localises to the nucleus. Functionally, strong transcriptional activator; DNA-binding protein that specifically recognize the sequence 5'-YAAC[GT]G-3'. Could have a role in the proliferation and/or differentiation of neurogenic, spermatogenic and B-lymphoid cells. This is Myb-related protein A (MYBL1) from Gallus gallus (Chicken).